Consider the following 175-residue polypeptide: Large ribosomal subunit protein uL10 (175 aa).

Belongs to the universal ribosomal protein uL10 family. Part of the ribosomal stalk of the 50S ribosomal subunit. The N-terminus interacts with L11 and the large rRNA to form the base of the stalk. The C-terminus forms an elongated spine to which L12 dimers bind in a sequential fashion forming a multimeric L10(L12)X complex.

In terms of biological role, forms part of the ribosomal stalk, playing a central role in the interaction of the ribosome with GTP-bound translation factors. This chain is Large ribosomal subunit protein uL10, found in Prochlorococcus marinus (strain MIT 9301).